A 278-amino-acid polypeptide reads, in one-letter code: Bifunctional protein FolD (278 aa).

NADP(+) contacts are provided by residues 165-167 and Ser-190; that span reads GRS.

It belongs to the tetrahydrofolate dehydrogenase/cyclohydrolase family. Homodimer.

It carries out the reaction (6R)-5,10-methylene-5,6,7,8-tetrahydrofolate + NADP(+) = (6R)-5,10-methenyltetrahydrofolate + NADPH. It catalyses the reaction (6R)-5,10-methenyltetrahydrofolate + H2O = (6R)-10-formyltetrahydrofolate + H(+). Its pathway is one-carbon metabolism; tetrahydrofolate interconversion. Catalyzes the oxidation of 5,10-methylenetetrahydrofolate to 5,10-methenyltetrahydrofolate and then the hydrolysis of 5,10-methenyltetrahydrofolate to 10-formyltetrahydrofolate. The chain is Bifunctional protein FolD from Clostridium tetani (strain Massachusetts / E88).